The chain runs to 747 residues: Protein FAM83C (747 aa).

The DUF1669 stretch occupies residues 1–309 (MFGGPGPGVL…LYAESQPVEG (309 aa)). Disordered regions lie at residues 322 to 352 (LRPP…SSIK), 374 to 412 (TGVV…LYRA), 462 to 484 (LSRF…GRWV), 517 to 550 (AREV…SPSQ), 588 to 633 (NQSR…LGHS), 646 to 672 (GEGP…DEKR), and 692 to 715 (ARQG…DLVR). Positions 328-350 (ALAFRPDVPSPTSSLPSSTSLSS) are enriched in low complexity. The span at 390–402 (GQPSLHRQLSDPN) shows a compositional bias: polar residues. The span at 697–707 (EPGGPKGGHLN) shows a compositional bias: gly residues.

Belongs to the FAM83 family. As to quaternary structure, may interact with RAF1. Phosphorylated in vitro by CSNK1A1.

The protein localises to the cytoplasm. Functionally, may play a role in MAPK signaling. This is Protein FAM83C from Homo sapiens (Human).